The following is a 385-amino-acid chain: tRNA-specific 2-thiouridylase MnmA (385 aa).

Residues 27–34 (AMSGGVDS) and Leu53 contribute to the ATP site. The Nucleophile role is filled by Cys121. A disulfide bond links Cys121 and Cys217. Gly145 contacts ATP. The segment at 167-169 (KDQ) is interaction with tRNA. Cys217 (cysteine persulfide intermediate) is an active-site residue.

This sequence belongs to the MnmA/TRMU family.

It is found in the cytoplasm. The enzyme catalyses S-sulfanyl-L-cysteinyl-[protein] + uridine(34) in tRNA + AH2 + ATP = 2-thiouridine(34) in tRNA + L-cysteinyl-[protein] + A + AMP + diphosphate + H(+). Catalyzes the 2-thiolation of uridine at the wobble position (U34) of tRNA, leading to the formation of s(2)U34. This Sorangium cellulosum (strain So ce56) (Polyangium cellulosum (strain So ce56)) protein is tRNA-specific 2-thiouridylase MnmA.